Consider the following 25-residue polypeptide: Nicotinic acetylcholine receptor-binding protein Mnn-4 (25 aa).

A disulfide bond links C3 and C20.

The protein belongs to the three-finger toxin family. Short-chain subfamily. In terms of tissue distribution, expressed by the venom gland.

It localises to the secreted. Its function is as follows. Binds and may inhibit nicotinic acetylcholine receptors (nAChR). The polypeptide is Nicotinic acetylcholine receptor-binding protein Mnn-4 (Micrurus nigrocinctus (Central American coral snake)).